A 127-amino-acid polypeptide reads, in one-letter code: Aspartate 1-decarboxylase (127 aa).

The active-site Schiff-base intermediate with substrate; via pyruvic acid is S25. S25 carries the pyruvic acid (Ser) modification. T57 is a binding site for substrate. Residue Y58 is the Proton donor of the active site. Position 73 to 75 (73 to 75 (GAA)) interacts with substrate.

The protein belongs to the PanD family. Heterooctamer of four alpha and four beta subunits. It depends on pyruvate as a cofactor. In terms of processing, is synthesized initially as an inactive proenzyme, which is activated by self-cleavage at a specific serine bond to produce a beta-subunit with a hydroxyl group at its C-terminus and an alpha-subunit with a pyruvoyl group at its N-terminus.

It localises to the cytoplasm. It carries out the reaction L-aspartate + H(+) = beta-alanine + CO2. Its pathway is cofactor biosynthesis; (R)-pantothenate biosynthesis; beta-alanine from L-aspartate: step 1/1. Functionally, catalyzes the pyruvoyl-dependent decarboxylation of aspartate to produce beta-alanine. This chain is Aspartate 1-decarboxylase, found in Bacillus cytotoxicus (strain DSM 22905 / CIP 110041 / 391-98 / NVH 391-98).